We begin with the raw amino-acid sequence, 653 residues long: Macrolide export ATP-binding/permease protein MacB (653 aa).

The region spanning 6–244 is the ABC transporter domain; that stretch reads LALSHICREF…AAASLPADKP (239 aa). 42-49 contacts ATP; it reads GSSGSGKS. 4 consecutive transmembrane segments (helical) span residues 277-297, 526-546, 587-607, and 617-637; these read FLTM…VALG, LAFL…IGVM, LGGI…NLLL, and FSIG…GYFP.

The protein belongs to the ABC transporter superfamily. Macrolide exporter (TC 3.A.1.122) family. In terms of assembly, homodimer.

The protein resides in the cell inner membrane. Functionally, non-canonical ABC transporter that contains transmembrane domains (TMD), which form a pore in the inner membrane, and an ATP-binding domain (NBD), which is responsible for energy generation. Confers resistance against macrolides. This chain is Macrolide export ATP-binding/permease protein MacB, found in Bradyrhizobium diazoefficiens (strain JCM 10833 / BCRC 13528 / IAM 13628 / NBRC 14792 / USDA 110).